We begin with the raw amino-acid sequence, 579 residues long: Glutamate--tRNA ligase (579 aa).

The 'HIGH' region signature appears at 114 to 124 (PNPNGPWHIGH).

Belongs to the class-I aminoacyl-tRNA synthetase family. Glutamate--tRNA ligase type 2 subfamily.

It is found in the cytoplasm. It carries out the reaction tRNA(Glu) + L-glutamate + ATP = L-glutamyl-tRNA(Glu) + AMP + diphosphate. Functionally, catalyzes the attachment of glutamate to tRNA(Glu) in a two-step reaction: glutamate is first activated by ATP to form Glu-AMP and then transferred to the acceptor end of tRNA(Glu). In Haloarcula marismortui (strain ATCC 43049 / DSM 3752 / JCM 8966 / VKM B-1809) (Halobacterium marismortui), this protein is Glutamate--tRNA ligase.